An 808-amino-acid polypeptide reads, in one-letter code: Probable mannosyl-oligosaccharide glucosidase (808 aa).

Topologically, residues 1 to 11 are cytoplasmic; it reads MVSDMLGGNKR. Residues 12 to 31 form a helical; Signal-anchor for type II membrane protein membrane-spanning segment; it reads WILFGLLSFLLNCVLVSCSV. Over 32-808 the chain is Lumenal; that stretch reads EDIEKAANDS…LVVNIMSENY (777 aa). An N-linked (GlcNAc...) asparagine glycan is attached at Asn39. The active-site Proton donor is the Asp580. Catalysis depends on Glu778, which acts as the Proton acceptor.

It belongs to the glycosyl hydrolase 63 family.

It is found in the endoplasmic reticulum membrane. The enzyme catalyses N(4)-(alpha-D-Glc-(1-&gt;2)-alpha-D-Glc-(1-&gt;3)-alpha-D-Glc-(1-&gt;3)-alpha-D-Man-(1-&gt;2)-alpha-D-Man-(1-&gt;2)-alpha-D-Man-(1-&gt;3)-[alpha-D-Man-(1-&gt;2)-alpha-D-Man-(1-&gt;3)-[alpha-D-Man-(1-&gt;2)-alpha-D-Man-(1-&gt;6)]-alpha-D-Man-(1-&gt;6)]-beta-D-Man-(1-&gt;4)-beta-D-GlcNAc-(1-&gt;4)-beta-D-GlcNAc)-L-asparaginyl-[protein] + H2O = N(4)-(alpha-D-Glc-(1-&gt;3)-alpha-D-Glc-(1-&gt;3)-alpha-D-Man-(1-&gt;2)-alpha-D-Man-(1-&gt;2)-alpha-D-Man-(1-&gt;3)-[alpha-D-Man-(1-&gt;2)-alpha-D-Man-(1-&gt;3)-[alpha-D-Man-(1-&gt;2)-alpha-D-Man-(1-&gt;6)]-alpha-D-Man-(1-&gt;6)]-beta-D-Man-(1-&gt;4)-beta-D-GlcNAc-(1-&gt;4)-beta-D-GlcNAc)-L-asparaginyl-[protein] + beta-D-glucose. Functionally, cleaves the distal alpha 1,2-linked glucose residue from the Glc(3)Man(9)GlcNAc(2) oligosaccharide precursor highly specifically. This chain is Probable mannosyl-oligosaccharide glucosidase, found in Schizosaccharomyces pombe (strain 972 / ATCC 24843) (Fission yeast).